The following is a 238-amino-acid chain: Ribonuclease PH (238 aa).

Residues R86 and 124–126 (GTR) contribute to the phosphate site.

Belongs to the RNase PH family. Homohexameric ring arranged as a trimer of dimers.

The enzyme catalyses tRNA(n+1) + phosphate = tRNA(n) + a ribonucleoside 5'-diphosphate. Functionally, phosphorolytic 3'-5' exoribonuclease that plays an important role in tRNA 3'-end maturation. Removes nucleotide residues following the 3'-CCA terminus of tRNAs; can also add nucleotides to the ends of RNA molecules by using nucleoside diphosphates as substrates, but this may not be physiologically important. Probably plays a role in initiation of 16S rRNA degradation (leading to ribosome degradation) during starvation. The polypeptide is Ribonuclease PH (Acinetobacter baylyi (strain ATCC 33305 / BD413 / ADP1)).